Consider the following 134-residue polypeptide: Putative toxin MJ0605 (134 aa).

Belongs to the UPF0332 family.

In terms of biological role, putative toxin component of a putative type VII toxin-antitoxin (TA) system. Its cognate antitoxin might be MJ0604. This chain is Putative toxin MJ0605, found in Methanocaldococcus jannaschii (strain ATCC 43067 / DSM 2661 / JAL-1 / JCM 10045 / NBRC 100440) (Methanococcus jannaschii).